Consider the following 289-residue polypeptide: Mitochondrial fission regulator 1-like (289 aa).

Position 27 is a phosphothreonine (Thr-27). Phosphoserine is present on residues Ser-38, Ser-100, Ser-107, Ser-221, Ser-222, Ser-235, Ser-258, and Ser-270.

It belongs to the MTFR1 family. In terms of processing, phosphorylated by AMPK. Upon stress, phosphorylation by AMPK is sufficient to induce mitochondrial fragmentation.

The protein resides in the mitochondrion outer membrane. Functionally, mitochondrial protein required for adaptation of miochondrial dynamics to metabolic changes. Regulates mitochondrial morphology at steady state and mediates AMPK-dependent stress-induced mitochondrial fragmentation via the control of OPA1 levels. The sequence is that of Mitochondrial fission regulator 1-like (MTFR1L) from Bos taurus (Bovine).